The following is an 84-amino-acid chain: Small ribosomal subunit protein bS16 (84 aa).

This sequence belongs to the bacterial ribosomal protein bS16 family.

The polypeptide is Small ribosomal subunit protein bS16 (Endomicrobium trichonymphae).